Here is a 571-residue protein sequence, read N- to C-terminus: MALPKDAIPSLSECQCGICMEILVEPVTLPCNHTLCKPCFQSTVEKASLCCPFCRRRVSSWTRYHTRRNSLVNVELWTIIQKHYPRECKLRASGQESEEVADDYQPVRLLSKPGELRREYEEEISKVAAERRASEEEENKASEEYIQRLLAEEEEEEKRQAEKRRRAMEEQLKSDEELARKLSIDINNFCEGSISASPLNSRKSDPVTPKSEKKSKNKQRNTGDIQKYLTPKSQFGSASHSEAVQEVRKDSVSKDIDSSDRKSPTGQDTEIEDMPTLSPQISLGVGEQGADSSIESPMPWLCACGAEWYHEGNVKTRPSNHGKELCVLSHERPKTRVPYSKETAVMPCGRTESGCAPTSGVTQTNGNNTGETENEESCLLISKEISKRKNQESSFEAVKDPCFSAKRRKVSPESSPDQEETEINFTQKLIDLEHLLFERHKQEEQDRLLALQLQKEVDKEQMVPNRQKGSPDEYHLRATSSPPDKVLNGQRKNPKDGNFKRQTHTKHPTPERGSRDKNRQVSLKMQLKQSVNRRKMPNSTRDHCKVSKSAHSLQPSISQKSVFQMFQRCTK.

The RING-type zinc-finger motif lies at 16-55 (CGICMEILVEPVTLPCNHTLCKPCFQSTVEKASLCCPFCR). At Ser70 the chain carries Phosphoserine. An LR motif 1 motif is present at residues 110–128 (LSKPGELRREYEEEISKVA). At Ser134 the chain carries Phosphoserine. The UMI motif signature appears at 143–151 (EEYIQRLLA). 2 disordered regions span residues 151–174 (AEEEEEEKRQAEKRRRAMEEQLKS) and 191–292 (EGSI…GADS). The MIU motif 1 signature appears at 168–191 (MEEQLKSDEELARKLSIDINNFCE). Ser197 is modified (phosphoserine). Over residues 202–214 (RKSDPVTPKSEKK) the composition is skewed to basic and acidic residues. Lys210 participates in a covalent cross-link: Glycyl lysine isopeptide (Lys-Gly) (interchain with G-Cter in SUMO2). Residues 231–242 (PKSQFGSASHSE) show a composition bias toward polar residues. The segment covering 243–263 (AVQEVRKDSVSKDIDSSDRKS) has biased composition (basic and acidic residues). Residue Thr362 is modified to Phosphothreonine. 2 disordered regions span residues 390 to 422 (NQESSFEAVKDPCFSAKRRKVSPESSPDQEETE) and 459 to 560 (KEQM…ISQK). 3 positions are modified to phosphoserine: Ser411, Ser414, and Ser415. Positions 439–462 (RHKQEEQDRLLALQLQKEVDKEQM) match the MIU motif 2 motif. The LR motif 2 signature appears at 466–477 (RQKGSPDEYHLR). The residue at position 470 (Ser470) is a Phosphoserine. Residues 508 to 519 (PTPERGSRDKNR) are compositionally biased toward basic and acidic residues. 2 stretches are compositionally biased toward polar residues: residues 520-530 (QVSLKMQLKQS) and 549-560 (SAHSLQPSISQK). A Glycyl lysine isopeptide (Lys-Gly) (interchain with G-Cter in SUMO2) cross-link involves residue Lys528.

The protein belongs to the RNF168 family. In terms of assembly, monomer. Interacts with UBE2N/UBC13. In terms of processing, sumoylated with SUMO1 by PIAS4 in response to double-strand breaks (DSBs). Post-translationally, ubiquitinated.

It localises to the nucleus. It catalyses the reaction S-ubiquitinyl-[E2 ubiquitin-conjugating enzyme]-L-cysteine + [acceptor protein]-L-lysine = [E2 ubiquitin-conjugating enzyme]-L-cysteine + N(6)-ubiquitinyl-[acceptor protein]-L-lysine.. The protein operates within protein modification; protein ubiquitination. In terms of biological role, E3 ubiquitin-protein ligase required for accumulation of repair proteins to sites of DNA damage. Acts with UBE2N/UBC13 to amplify the RNF8-dependent histone ubiquitination. Recruited to sites of DNA damage at double-strand breaks (DSBs) by binding to ubiquitinated histone H2A and H2AX and amplifies the RNF8-dependent H2A ubiquitination, promoting the formation of 'Lys-63'-linked ubiquitin conjugates. This leads to concentrate ubiquitinated histones H2A and H2AX at DNA lesions to the threshold required for recruitment of TP53BP1 and BRCA1. Also recruited at DNA interstrand cross-links (ICLs) sites and promotes accumulation of 'Lys-63'-linked ubiquitination of histones H2A and H2AX, leading to recruitment of FAAP20/C1orf86 and Fanconi anemia (FA) complex, followed by interstrand cross-link repair. H2A ubiquitination also mediates the ATM-dependent transcriptional silencing at regions flanking DSBs in cis, a mechanism to avoid collision between transcription and repair intermediates. Also involved in class switch recombination in immune system, via its role in regulation of DSBs repair. Following DNA damage, promotes the ubiquitination and degradation of JMJD2A/KDM4A in collaboration with RNF8, leading to unmask H4K20me2 mark and promote the recruitment of TP53BP1 at DNA damage sites. Not able to initiate 'Lys-63'-linked ubiquitination in vitro; possibly due to partial occlusion of the UBE2N/UBC13-binding region. Catalyzes monoubiquitination of 'Lys-13' and 'Lys-15' of nucleosomal histone H2A (H2AK13Ub and H2AK15Ub, respectively). In Homo sapiens (Human), this protein is E3 ubiquitin-protein ligase RNF168.